A 207-amino-acid polypeptide reads, in one-letter code: uncharacterized protein (207 aa).

This is an uncharacterized protein from Frog virus 3 (isolate Goorha) (FV-3).